The primary structure comprises 263 residues: Thiazole synthase (263 aa).

Residue lysine 102 is the Schiff-base intermediate with DXP of the active site. Residues glycine 164, 190–191 (AG), and 212–213 (NT) each bind 1-deoxy-D-xylulose 5-phosphate.

It belongs to the ThiG family. In terms of assembly, homotetramer. Forms heterodimers with either ThiH or ThiS.

It is found in the cytoplasm. It catalyses the reaction [ThiS sulfur-carrier protein]-C-terminal-Gly-aminoethanethioate + 2-iminoacetate + 1-deoxy-D-xylulose 5-phosphate = [ThiS sulfur-carrier protein]-C-terminal Gly-Gly + 2-[(2R,5Z)-2-carboxy-4-methylthiazol-5(2H)-ylidene]ethyl phosphate + 2 H2O + H(+). It participates in cofactor biosynthesis; thiamine diphosphate biosynthesis. Functionally, catalyzes the rearrangement of 1-deoxy-D-xylulose 5-phosphate (DXP) to produce the thiazole phosphate moiety of thiamine. Sulfur is provided by the thiocarboxylate moiety of the carrier protein ThiS. In vitro, sulfur can be provided by H(2)S. The sequence is that of Thiazole synthase from Helicobacter hepaticus (strain ATCC 51449 / 3B1).